Here is a 148-residue protein sequence, read N- to C-terminus: Large ribosomal subunit protein uL15 (148 aa).

Positions 1–57 (MRLHDLYPFPEERKTRKRVGRGSGSGLGCTSGKGNKGQNARAGGGVRPGFEGGQMPL) are disordered. Gly residues-rich tracts occupy residues 21-35 (RGSGSGLGCTSGKGN) and 42-52 (AGGGVRPGFEG).

Belongs to the universal ribosomal protein uL15 family. As to quaternary structure, part of the 50S ribosomal subunit.

Its function is as follows. Binds to the 23S rRNA. In Nitratidesulfovibrio vulgaris (strain ATCC 29579 / DSM 644 / CCUG 34227 / NCIMB 8303 / VKM B-1760 / Hildenborough) (Desulfovibrio vulgaris), this protein is Large ribosomal subunit protein uL15.